The primary structure comprises 598 residues: tRNA(Met) cytidine acetyltransferase TmcA (598 aa).

ATP contacts are provided by residues Gln-141, 163-172 (GRGKSTLAGK), and Arg-288. Residues 332–490 (TDLRRLFDAD…HSAMMLYPLS (159 aa)) form the N-acetyltransferase domain. Acetyl-CoA is bound by residues 411-413 (IAV), 418-424 (QNQGIGS), and Arg-462.

This sequence belongs to the RNA cytidine acetyltransferase family. TmcA subfamily.

The protein resides in the cytoplasm. The catalysed reaction is cytidine(34) in elongator tRNA(Met) + acetyl-CoA + ATP + H2O = N(4)-acetylcytidine(34) in elongator tRNA(Met) + ADP + phosphate + CoA + H(+). Catalyzes the formation of N(4)-acetylcytidine (ac(4)C) at the wobble position of tRNA(Met), by using acetyl-CoA as an acetyl donor and ATP (or GTP). The chain is tRNA(Met) cytidine acetyltransferase TmcA from Haemophilus ducreyi (strain 35000HP / ATCC 700724).